Reading from the N-terminus, the 395-residue chain is MGIKHLYQIIQENAPDAVKAGEIKNHFGRKVAIDASMSIYSFLIAVRSDGQQLTSETGETTSHLMGMFYRTLRIVDNGIKPVYVFDGAPPKLKSGELAKRFMRKSEAAEAHEEAKEVGTAEEVEKFSRRTVRVTREHNEECKKLLKLMGVPYIDAPTEAEAQCAVLARAGKVYAAASEDMDTLCFDSPILLRHLTFSEQRKEPILEIHLDRVLEGLDMDRKQFVDLCILLGCDYLDPIPKVGPNTALKLIRDHGSLEQVVEAIKSDPKKKYTIPEDWPYKEARELFFDPDVRKADHPDCDFKWEAPDVEGLVKFLVEEKAFSEDRVRNAAARLQKNLKTAQQSRLEGFFKPIAKTEQEKAVLKRKHEEKLELQKKKKKEDAKAKKEAKSKPRGTT.

An N-domain region spans residues 1 to 104 (MGIKHLYQII…GELAKRFMRK (104 aa)). Asp34 is a binding site for Mg(2+). DNA contacts are provided by Arg47 and Arg70. The Mg(2+) site is built by Asp86, Glu158, Glu160, Asp179, and Asp181. The interval 122 to 253 (EVEKFSRRTV…NTALKLIRDH (132 aa)) is I-domain. Glu158 serves as a coordination point for DNA. Gly231 and Asp233 together coordinate DNA. Position 233 (Asp233) interacts with Mg(2+). The interval 341 to 349 (QQSRLEGFF) is interaction with PCNA. Basic and acidic residues predominate over residues 360–389 (AVLKRKHEEKLELQKKKKKEDAKAKKEAKS). The disordered stretch occupies residues 360–395 (AVLKRKHEEKLELQKKKKKEDAKAKKEAKSKPRGTT).

Belongs to the XPG/RAD2 endonuclease family. FEN1 subfamily. Interacts with PCNA. Three molecules of FEN1 bind to one PCNA trimer with each molecule binding to one PCNA monomer. PCNA stimulates the nuclease activity without altering cleavage specificity. Mg(2+) serves as cofactor. In terms of processing, phosphorylated. Phosphorylation upon DNA damage induces relocalization to the nuclear plasma.

It localises to the nucleus. It is found in the nucleolus. The protein resides in the nucleoplasm. The protein localises to the mitochondrion. Its function is as follows. Structure-specific nuclease with 5'-flap endonuclease and 5'-3' exonuclease activities involved in DNA replication and repair. During DNA replication, cleaves the 5'-overhanging flap structure that is generated by displacement synthesis when DNA polymerase encounters the 5'-end of a downstream Okazaki fragment. It enters the flap from the 5'-end and then tracks to cleave the flap base, leaving a nick for ligation. Also involved in the long patch base excision repair (LP-BER) pathway, by cleaving within the apurinic/apyrimidinic (AP) site-terminated flap. Acts as a genome stabilization factor that prevents flaps from equilibrating into structures that lead to duplications and deletions. Also possesses 5'-3' exonuclease activity on nicked or gapped double-stranded DNA, and exhibits RNase H activity. Also involved in replication and repair of rDNA and in repairing mitochondrial DNA. In Ajellomyces capsulatus (strain NAm1 / WU24) (Darling's disease fungus), this protein is Flap endonuclease 1.